Here is a 270-residue protein sequence, read N- to C-terminus: Putative pyruvate, phosphate dikinase regulatory protein (270 aa).

153–160 (GVSRTSKT) contacts ADP.

The protein belongs to the pyruvate, phosphate/water dikinase regulatory protein family. PDRP subfamily.

The catalysed reaction is N(tele)-phospho-L-histidyl/L-threonyl-[pyruvate, phosphate dikinase] + ADP = N(tele)-phospho-L-histidyl/O-phospho-L-threonyl-[pyruvate, phosphate dikinase] + AMP + H(+). It carries out the reaction N(tele)-phospho-L-histidyl/O-phospho-L-threonyl-[pyruvate, phosphate dikinase] + phosphate + H(+) = N(tele)-phospho-L-histidyl/L-threonyl-[pyruvate, phosphate dikinase] + diphosphate. Bifunctional serine/threonine kinase and phosphorylase involved in the regulation of the pyruvate, phosphate dikinase (PPDK) by catalyzing its phosphorylation/dephosphorylation. The chain is Putative pyruvate, phosphate dikinase regulatory protein from Halalkalibacterium halodurans (strain ATCC BAA-125 / DSM 18197 / FERM 7344 / JCM 9153 / C-125) (Bacillus halodurans).